A 134-amino-acid chain; its full sequence is Small ribosomal subunit protein uS12 (134 aa).

At Asp89 the chain carries 3-methylthioaspartic acid. The interval 101-134 (TLDASGVNGRNQSRSKYGTKRPKPGQAAAGGKKK) is disordered. Over residues 125 to 134 (GQAAAGGKKK) the composition is skewed to low complexity.

The protein belongs to the universal ribosomal protein uS12 family. Part of the 30S ribosomal subunit. Contacts proteins S8 and S17. May interact with IF1 in the 30S initiation complex.

In terms of biological role, with S4 and S5 plays an important role in translational accuracy. Its function is as follows. Interacts with and stabilizes bases of the 16S rRNA that are involved in tRNA selection in the A site and with the mRNA backbone. Located at the interface of the 30S and 50S subunits, it traverses the body of the 30S subunit contacting proteins on the other side and probably holding the rRNA structure together. The combined cluster of proteins S8, S12 and S17 appears to hold together the shoulder and platform of the 30S subunit. The chain is Small ribosomal subunit protein uS12 from Gemmatimonas aurantiaca (strain DSM 14586 / JCM 11422 / NBRC 100505 / T-27).